The following is a 375-amino-acid chain: Putative F-box/kelch-repeat protein At3g24610 (375 aa).

The segment at 1–27 is disordered; it reads MSNEAPEVEPHSKRRKKEASPSSSSGF. In terms of domain architecture, F-box spans 25 to 71; the sequence is SGFLQSLPEAVAMICLARVSRLDHAALSLVSKSCRSMVLSPELYQTR. Residues 138–183 form a Kelch repeat; that stretch reads KINVWGGCKYKHYYDWGEVFDPKTQTWADMSIPKPVREEKIYVVDS.

The polypeptide is Putative F-box/kelch-repeat protein At3g24610 (Arabidopsis thaliana (Mouse-ear cress)).